Consider the following 242-residue polypeptide: Putative pyrimidine-specific ribonucleoside hydrolase RihB (242 aa).

The substrate site is built by Gln156 and His168.

This sequence belongs to the IUNH family. RihB subfamily.

It catalyses the reaction a pyrimidine ribonucleoside + H2O = a pyrimidine nucleobase + D-ribose. This is Putative pyrimidine-specific ribonucleoside hydrolase RihB (rihB) from Shigella boydii serotype 4 (strain Sb227).